A 375-amino-acid chain; its full sequence is tRNA-specific 2-thiouridylase MnmA (375 aa).

ATP is bound by residues 8-15 (GLSGGVDS) and M34. The segment at 104 to 106 (NPD) is interaction with target base in tRNA. C109 acts as the Nucleophile in catalysis. A disulfide bridge connects residues C109 and C205. Residue G133 participates in ATP binding. An interaction with tRNA region spans residues 155–157 (KDQ). The active-site Cysteine persulfide intermediate is C205. Residues 313 to 314 (RY) form an interaction with tRNA region.

Belongs to the MnmA/TRMU family.

It localises to the cytoplasm. It carries out the reaction S-sulfanyl-L-cysteinyl-[protein] + uridine(34) in tRNA + AH2 + ATP = 2-thiouridine(34) in tRNA + L-cysteinyl-[protein] + A + AMP + diphosphate + H(+). Functionally, catalyzes the 2-thiolation of uridine at the wobble position (U34) of tRNA, leading to the formation of s(2)U34. The sequence is that of tRNA-specific 2-thiouridylase MnmA from Acholeplasma laidlawii (strain PG-8A).